The primary structure comprises 406 residues: (R)-benzylsuccinyl-CoA dehydrogenase (406 aa).

This sequence belongs to the acyl-CoA dehydrogenase family. As to quaternary structure, homotetramer. The cofactor is FAD.

It carries out the reaction (R)-2-benzylsuccinyl-CoA + oxidized [electron-transfer flavoprotein] + H(+) = (E)-2-benzylidenesuccinyl-CoA + reduced [electron-transfer flavoprotein]. It participates in xenobiotic degradation; toluene degradation. With respect to regulation, inhibited by (S)-benzylsuccinyl-CoA. Catalyzes the oxidation of benzylsuccinyl-CoA to benzylidenesuccinyl-CoA. This Thauera aromatica protein is (R)-benzylsuccinyl-CoA dehydrogenase (bbsG).